The following is a 182-amino-acid chain: Large ribosomal subunit protein uL5 (182 aa).

The protein belongs to the universal ribosomal protein uL5 family. As to quaternary structure, part of the 50S ribosomal subunit; part of the 5S rRNA/L5/L18/L25 subcomplex. Contacts the 5S rRNA and the P site tRNA. Forms a bridge to the 30S subunit in the 70S ribosome.

This is one of the proteins that bind and probably mediate the attachment of the 5S RNA into the large ribosomal subunit, where it forms part of the central protuberance. In the 70S ribosome it contacts protein S13 of the 30S subunit (bridge B1b), connecting the 2 subunits; this bridge is implicated in subunit movement. Contacts the P site tRNA; the 5S rRNA and some of its associated proteins might help stabilize positioning of ribosome-bound tRNAs. This is Large ribosomal subunit protein uL5 from Nostoc sp. (strain PCC 7120 / SAG 25.82 / UTEX 2576).